A 205-amino-acid polypeptide reads, in one-letter code: Adenylyl-sulfate kinase (205 aa).

35–42 (GLSGAGKS) contacts ATP. S109 serves as the catalytic Phosphoserine intermediate.

It belongs to the APS kinase family.

The catalysed reaction is adenosine 5'-phosphosulfate + ATP = 3'-phosphoadenylyl sulfate + ADP + H(+). It participates in sulfur metabolism; hydrogen sulfide biosynthesis; sulfite from sulfate: step 2/3. In terms of biological role, catalyzes the synthesis of activated sulfate. The protein is Adenylyl-sulfate kinase of Acaryochloris marina (strain MBIC 11017).